A 292-amino-acid polypeptide reads, in one-letter code: Aspartate carbamoyltransferase catalytic subunit (292 aa).

The carbamoyl phosphate site is built by arginine 50 and threonine 51. Residue lysine 78 coordinates L-aspartate. Positions 100, 128, and 131 each coordinate carbamoyl phosphate. L-aspartate-binding residues include arginine 161 and arginine 211. Glycine 250 and proline 251 together coordinate carbamoyl phosphate.

This sequence belongs to the aspartate/ornithine carbamoyltransferase superfamily. ATCase family. Heterododecamer (2C3:3R2) of six catalytic PyrB chains organized as two trimers (C3), and six regulatory PyrI chains organized as three dimers (R2).

The catalysed reaction is carbamoyl phosphate + L-aspartate = N-carbamoyl-L-aspartate + phosphate + H(+). It functions in the pathway pyrimidine metabolism; UMP biosynthesis via de novo pathway; (S)-dihydroorotate from bicarbonate: step 2/3. In terms of biological role, catalyzes the condensation of carbamoyl phosphate and aspartate to form carbamoyl aspartate and inorganic phosphate, the committed step in the de novo pyrimidine nucleotide biosynthesis pathway. This Nitratiruptor sp. (strain SB155-2) protein is Aspartate carbamoyltransferase catalytic subunit.